The chain runs to 122 residues: Small ribosomal subunit protein bS16 (122 aa).

The disordered stretch occupies residues 81–122 (GLMKRDAKNNPKKGEPGEKAKERAKERAEKAAAGSTEDAAAE). Residues 83–110 (MKRDAKNNPKKGEPGEKAKERAKERAEK) are compositionally biased toward basic and acidic residues. A compositionally biased stretch (low complexity) spans 111–122 (AAAGSTEDAAAE).

The protein belongs to the bacterial ribosomal protein bS16 family.

This chain is Small ribosomal subunit protein bS16, found in Xanthobacter autotrophicus (strain ATCC BAA-1158 / Py2).